The chain runs to 202 residues: NADH-quinone oxidoreductase subunit C (202 aa).

The protein belongs to the complex I 30 kDa subunit family. NDH-1 is composed of 14 different subunits. Subunits NuoB, C, D, E, F, and G constitute the peripheral sector of the complex.

Its subcellular location is the cell inner membrane. The catalysed reaction is a quinone + NADH + 5 H(+)(in) = a quinol + NAD(+) + 4 H(+)(out). NDH-1 shuttles electrons from NADH, via FMN and iron-sulfur (Fe-S) centers, to quinones in the respiratory chain. The immediate electron acceptor for the enzyme in this species is believed to be ubiquinone. Couples the redox reaction to proton translocation (for every two electrons transferred, four hydrogen ions are translocated across the cytoplasmic membrane), and thus conserves the redox energy in a proton gradient. This chain is NADH-quinone oxidoreductase subunit C, found in Paracidovorax citrulli (strain AAC00-1) (Acidovorax citrulli).